Here is a 103-residue protein sequence, read N- to C-terminus: Small ribosomal subunit protein uS10 (103 aa).

It belongs to the universal ribosomal protein uS10 family. In terms of assembly, part of the 30S ribosomal subunit.

Involved in the binding of tRNA to the ribosomes. This is Small ribosomal subunit protein uS10 from Saccharophagus degradans (strain 2-40 / ATCC 43961 / DSM 17024).